We begin with the raw amino-acid sequence, 591 residues long: Splicing factor U2af large subunit A (591 aa).

Residues 1 to 215 (MAEHDAPPES…QSKRMSGFDQ (215 aa)) are disordered. The segment covering 27 to 36 (SPQQDAQPLS) has biased composition (polar residues). 2 stretches are compositionally biased toward basic and acidic residues: residues 37-79 (SRDR…SRDR) and 157-191 (RERS…DRDG). RRM domains are found at residues 272–355 (RRVY…RPTD) and 392–470 (DRIF…RANQ).

Belongs to the splicing factor SR family.

The protein localises to the nucleus. Necessary for the splicing of pre-mRNA. This is Splicing factor U2af large subunit A (U2AF65A) from Triticum aestivum (Wheat).